The following is a 617-amino-acid chain: Dihydroxy-acid dehydratase (617 aa).

Mg(2+) is bound at residue Asp81. Cys122 is a [2Fe-2S] cluster binding site. Mg(2+) contacts are provided by Asp123 and Lys124. Residue Lys124 is modified to N6-carboxylysine. Cys195 provides a ligand contact to [2Fe-2S] cluster. Glu491 is a Mg(2+) binding site. Ser517 serves as the catalytic Proton acceptor.

The protein belongs to the IlvD/Edd family. Homodimer. [2Fe-2S] cluster serves as cofactor. It depends on Mg(2+) as a cofactor.

It catalyses the reaction (2R)-2,3-dihydroxy-3-methylbutanoate = 3-methyl-2-oxobutanoate + H2O. It carries out the reaction (2R,3R)-2,3-dihydroxy-3-methylpentanoate = (S)-3-methyl-2-oxopentanoate + H2O. It functions in the pathway amino-acid biosynthesis; L-isoleucine biosynthesis; L-isoleucine from 2-oxobutanoate: step 3/4. It participates in amino-acid biosynthesis; L-valine biosynthesis; L-valine from pyruvate: step 3/4. In terms of biological role, functions in the biosynthesis of branched-chain amino acids. Catalyzes the dehydration of (2R,3R)-2,3-dihydroxy-3-methylpentanoate (2,3-dihydroxy-3-methylvalerate) into 2-oxo-3-methylpentanoate (2-oxo-3-methylvalerate) and of (2R)-2,3-dihydroxy-3-methylbutanoate (2,3-dihydroxyisovalerate) into 2-oxo-3-methylbutanoate (2-oxoisovalerate), the penultimate precursor to L-isoleucine and L-valine, respectively. In Nitrosococcus oceani (strain ATCC 19707 / BCRC 17464 / JCM 30415 / NCIMB 11848 / C-107), this protein is Dihydroxy-acid dehydratase.